We begin with the raw amino-acid sequence, 146 residues long: UPF0178 protein BCAH820_3075 (146 aa).

This sequence belongs to the UPF0178 family.

In Bacillus cereus (strain AH820), this protein is UPF0178 protein BCAH820_3075.